A 1037-amino-acid polypeptide reads, in one-letter code: Sentrin-specific protease 7 (1037 aa).

Positions 1–10 (MDRARPGRRR) are enriched in basic residues. 2 disordered regions span residues 1-28 (MDRA…SPAD) and 182-420 (ASLS…SEEN). A phosphoserine mark is found at serine 12, serine 13, serine 25, and serine 189. Polar residues-rich tracts occupy residues 182 to 211 (ASLS…NVNH) and 253 to 263 (TPQSKDFNSGN). Over residues 289 to 299 (VSRKRKKRGRS) the composition is skewed to basic residues. Residues 300–309 (NFHNSHNPKS) are compositionally biased toward polar residues. Basic and acidic residues-rich tracts occupy residues 310–320 (SVDKSTEYIKE) and 330–340 (KLEESNEDSHQ). Residues 381–399 (NKSSESSVSSEVAENSSAA) show a composition bias toward low complexity. 2 positions are modified to phosphoserine: serine 432 and serine 433. Residues 747–1037 (LGVTNEDLEC…HLQQQKGSSS (291 aa)) form a protease region. The active site involves histidine 847. A disordered region spans residues 873–910 (EFQDQQSQHDNKTIDNDPHTTSTVFTSAEESQSTETSM). Basic and acidic residues predominate over residues 879–890 (SQHDNKTIDNDP). Over residues 898–910 (TSAEESQSTETSM) the composition is skewed to low complexity. Aspartate 926 is an active-site residue. Cysteine 979 (nucleophile) is an active-site residue.

This sequence belongs to the peptidase C48 family.

The protein resides in the cytoplasm. Protease that acts as a positive regulator of the cGAS-STING pathway by catalyzing desumoylation of CGAS. Desumoylation of CGAS promotes DNA-binding activity of CGAS, subsequent oligomerization and activation. Deconjugates SUMO2 and SUMO3 from targeted proteins, but not SUMO1. Catalyzes the deconjugation of poly-SUMO2 and poly-SUMO3 chains. Has very low efficiency in processing full-length SUMO proteins to their mature forms. This is Sentrin-specific protease 7 (Senp7) from Rattus norvegicus (Rat).